Here is a 191-residue protein sequence, read N- to C-terminus: Adenylate kinase (191 aa).

9–17 (GVPGVGATT) is an ATP binding site.

It belongs to the archaeal adenylate kinase family.

Its subcellular location is the cytoplasm. The enzyme catalyses AMP + ATP = 2 ADP. This chain is Adenylate kinase, found in Methanopyrus kandleri (strain AV19 / DSM 6324 / JCM 9639 / NBRC 100938).